Reading from the N-terminus, the 354-residue chain is Protein RecA (354 aa).

67–74 (GPESSGKT) serves as a coordination point for ATP.

The protein belongs to the RecA family.

Its subcellular location is the cytoplasm. In terms of biological role, can catalyze the hydrolysis of ATP in the presence of single-stranded DNA, the ATP-dependent uptake of single-stranded DNA by duplex DNA, and the ATP-dependent hybridization of homologous single-stranded DNAs. It interacts with LexA causing its activation and leading to its autocatalytic cleavage. The polypeptide is Protein RecA (Serratia marcescens).